Consider the following 114-residue polypeptide: Phosphoribosyl-AMP cyclohydrolase (114 aa).

Asp76 is a binding site for Mg(2+). Residue Cys77 participates in Zn(2+) binding. Residues Asp78 and Asp80 each coordinate Mg(2+). 2 residues coordinate Zn(2+): Cys93 and Cys100.

This sequence belongs to the PRA-CH family. In terms of assembly, homodimer. Mg(2+) is required as a cofactor. Zn(2+) serves as cofactor.

The protein resides in the cytoplasm. It carries out the reaction 1-(5-phospho-beta-D-ribosyl)-5'-AMP + H2O = 1-(5-phospho-beta-D-ribosyl)-5-[(5-phospho-beta-D-ribosylamino)methylideneamino]imidazole-4-carboxamide. It functions in the pathway amino-acid biosynthesis; L-histidine biosynthesis; L-histidine from 5-phospho-alpha-D-ribose 1-diphosphate: step 3/9. Functionally, catalyzes the hydrolysis of the adenine ring of phosphoribosyl-AMP. This chain is Phosphoribosyl-AMP cyclohydrolase, found in Streptococcus sanguinis (strain SK36).